Here is a 274-residue protein sequence, read N- to C-terminus: 2,3,4,5-tetrahydropyridine-2,6-dicarboxylate N-succinyltransferase (274 aa).

Positions 104 and 141 each coordinate substrate.

This sequence belongs to the transferase hexapeptide repeat family. As to quaternary structure, homotrimer.

It is found in the cytoplasm. The enzyme catalyses (S)-2,3,4,5-tetrahydrodipicolinate + succinyl-CoA + H2O = (S)-2-succinylamino-6-oxoheptanedioate + CoA. It functions in the pathway amino-acid biosynthesis; L-lysine biosynthesis via DAP pathway; LL-2,6-diaminopimelate from (S)-tetrahydrodipicolinate (succinylase route): step 1/3. The sequence is that of 2,3,4,5-tetrahydropyridine-2,6-dicarboxylate N-succinyltransferase from Escherichia coli O139:H28 (strain E24377A / ETEC).